We begin with the raw amino-acid sequence, 158 residues long: Cyclic pyranopterin monophosphate synthase (158 aa).

Substrate-binding positions include 76-78 (LCH) and 114-115 (ME). The active site involves D129.

Belongs to the MoaC family. As to quaternary structure, homohexamer; trimer of dimers.

It catalyses the reaction (8S)-3',8-cyclo-7,8-dihydroguanosine 5'-triphosphate = cyclic pyranopterin phosphate + diphosphate. It functions in the pathway cofactor biosynthesis; molybdopterin biosynthesis. In terms of biological role, catalyzes the conversion of (8S)-3',8-cyclo-7,8-dihydroguanosine 5'-triphosphate to cyclic pyranopterin monophosphate (cPMP). This chain is Cyclic pyranopterin monophosphate synthase, found in Shewanella baltica (strain OS155 / ATCC BAA-1091).